We begin with the raw amino-acid sequence, 334 residues long: Glycosylinositol phosphorylceramide mannosyl transferase 1 (334 aa).

Over 1 to 26 the chain is Cytoplasmic; the sequence is MGGGEVSKEMGACSLAYRRGDQKLRK. A helical; Signal-anchor for type II membrane protein transmembrane segment spans residues 27–49; it reads FVTARSTKFLLFCCIAFVLVTIV. The Lumenal segment spans residues 50 to 334; sequence CRSSRPWVNS…AVDSRNLWFW (285 aa). Asn-58 carries N-linked (GlcNAc...) asparagine glycosylation. Substrate-binding positions include 145–150, 166–168, Arg-196, and 258–262; these read DSLNNR, DDD, and RNCED. Asp-168 provides a ligand contact to Mn(2+). Cys-260 and Cys-305 are joined by a disulfide. Residue Asp-262 is part of the active site. An N-linked (GlcNAc...) asparagine glycan is attached at Asn-271. Residues 289–302 and 292–302 contribute to the substrate site; these read STGI…TEKR and ISSIGGHTEKR.

It belongs to the glycosyltransferase 64 family. Mn(2+) serves as cofactor. As to expression, expressed in leaves, roots, stem, and flowers.

Its subcellular location is the golgi apparatus membrane. Its pathway is protein modification; protein glycosylation. It participates in sphingolipid metabolism. Functionally, mannosyl transferase (ManT) required for the biosynthesis of mannose-carrying glycosylinositol phosphorylceramides (GIPCs). Maybe involved in cell-cell adhesion that maintains the integrity of organs by providing mechanical strength and facilitating the movement of metabolites throughout the plant during development. Prevents abscisic acid- (ABA-) mediated effects on development (e.g. cell size, flowering time, senescence). Probably implicated in beta-(1,4)-galactan biosynthesis thus being a cell-wall synthesis-related (CWSR) protein. This chain is Glycosylinositol phosphorylceramide mannosyl transferase 1, found in Arabidopsis thaliana (Mouse-ear cress).